The following is a 751-amino-acid chain: Pyridoxal-dependent decarboxylase domain-containing protein 1 (751 aa).

The tract at residues 659–751 is disordered; it reads QMRKEDSPDS…QEAESVETIR (93 aa). Over residues 690–702 the composition is skewed to polar residues; that stretch reads DSISETSSVSQLE. Over residues 720-729 the composition is skewed to basic and acidic residues; that stretch reads PQERPAHILE. A compositionally biased stretch (acidic residues) spans 742–751; it reads QEAESVETIR.

This sequence belongs to the group II decarboxylase family. Pyridoxal 5'-phosphate serves as cofactor.

The chain is Pyridoxal-dependent decarboxylase domain-containing protein 1 (pdxdc1) from Danio rerio (Zebrafish).